Consider the following 216-residue polypeptide: Probable GTP-binding protein EngB (216 aa).

The 175-residue stretch at 27 to 201 (EGIEVAFAGR…SQKLNTWFNE (175 aa)) folds into the EngB-type G domain. GTP contacts are provided by residues 35–42 (GRSNAGKS), 62–66 (GRTQL), 80–83 (DLPG), 147–150 (TKAD), and 180–182 (FSS). Mg(2+) contacts are provided by serine 42 and threonine 64.

The protein belongs to the TRAFAC class TrmE-Era-EngA-EngB-Septin-like GTPase superfamily. EngB GTPase family. The cofactor is Mg(2+).

Functionally, necessary for normal cell division and for the maintenance of normal septation. The protein is Probable GTP-binding protein EngB of Serratia proteamaculans (strain 568).